The chain runs to 259 residues: Imidazole glycerol phosphate synthase subunit HisF (259 aa).

Active-site residues include Asp11 and Asp130.

It belongs to the HisA/HisF family. In terms of assembly, heterodimer of HisH and HisF.

It localises to the cytoplasm. It catalyses the reaction 5-[(5-phospho-1-deoxy-D-ribulos-1-ylimino)methylamino]-1-(5-phospho-beta-D-ribosyl)imidazole-4-carboxamide + L-glutamine = D-erythro-1-(imidazol-4-yl)glycerol 3-phosphate + 5-amino-1-(5-phospho-beta-D-ribosyl)imidazole-4-carboxamide + L-glutamate + H(+). Its pathway is amino-acid biosynthesis; L-histidine biosynthesis; L-histidine from 5-phospho-alpha-D-ribose 1-diphosphate: step 5/9. Functionally, IGPS catalyzes the conversion of PRFAR and glutamine to IGP, AICAR and glutamate. The HisF subunit catalyzes the cyclization activity that produces IGP and AICAR from PRFAR using the ammonia provided by the HisH subunit. The polypeptide is Imidazole glycerol phosphate synthase subunit HisF (Solidesulfovibrio magneticus (strain ATCC 700980 / DSM 13731 / RS-1) (Desulfovibrio magneticus)).